Here is a 204-residue protein sequence, read N- to C-terminus: Holliday junction branch migration complex subunit RuvA (204 aa).

Residues 1–64 are domain I; sequence MIGRVTGILV…EDAHLLFGFS (64 aa). Residues 65–143 are domain II; sequence HKQDRSLFRE…GLQQTDFFIK (79 aa). The flexible linker stretch occupies residues 144-155; the sequence is SSHLPGIKCSKL. Positions 156–204 are domain III; sequence DQSLQLDEAVSALIALGYKPIEAEKMVKKVLKADLTSEQLIREALKAAL.

This sequence belongs to the RuvA family. As to quaternary structure, homotetramer. Forms an RuvA(8)-RuvB(12)-Holliday junction (HJ) complex. HJ DNA is sandwiched between 2 RuvA tetramers; dsDNA enters through RuvA and exits via RuvB. An RuvB hexamer assembles on each DNA strand where it exits the tetramer. Each RuvB hexamer is contacted by two RuvA subunits (via domain III) on 2 adjacent RuvB subunits; this complex drives branch migration. In the full resolvosome a probable DNA-RuvA(4)-RuvB(12)-RuvC(2) complex forms which resolves the HJ.

Its subcellular location is the cytoplasm. In terms of biological role, the RuvA-RuvB-RuvC complex processes Holliday junction (HJ) DNA during genetic recombination and DNA repair, while the RuvA-RuvB complex plays an important role in the rescue of blocked DNA replication forks via replication fork reversal (RFR). RuvA specifically binds to HJ cruciform DNA, conferring on it an open structure. The RuvB hexamer acts as an ATP-dependent pump, pulling dsDNA into and through the RuvAB complex. HJ branch migration allows RuvC to scan DNA until it finds its consensus sequence, where it cleaves and resolves the cruciform DNA. The protein is Holliday junction branch migration complex subunit RuvA of Histophilus somni (strain 2336) (Haemophilus somnus).